We begin with the raw amino-acid sequence, 241 residues long: Cell division cycle-associated protein 4 (241 aa).

Residues 30–77 (YSLQRQSLLDMSLVKLQLCHMLVEPNLCRSVLIANTVRQIQEEMTQDG) form the SERTA domain.

Highest levels of expression in the pancreas, thymus, testis, spleen, liver, placenta and leukocytes. Relatively low levels in the lung, kidney, prostate, ovary, small intestine and colon. Hardly detectable, if at all, in the brain, skeletal muscle and heart.

It is found in the nucleus. Its function is as follows. May participate in the regulation of cell proliferation through the E2F/RB pathway. May be involved in molecular regulation of hematopoietic stem cells and progenitor cell lineage commitment and differentiation. This is Cell division cycle-associated protein 4 (CDCA4) from Homo sapiens (Human).